The following is an 87-amino-acid chain: Small ribosomal subunit protein bS18 (87 aa).

The protein belongs to the bacterial ribosomal protein bS18 family. Part of the 30S ribosomal subunit. Forms a tight heterodimer with protein bS6.

Binds as a heterodimer with protein bS6 to the central domain of the 16S rRNA, where it helps stabilize the platform of the 30S subunit. The chain is Small ribosomal subunit protein bS18 from Mesomycoplasma hyopneumoniae (strain 232) (Mycoplasma hyopneumoniae).